The following is a 327-amino-acid chain: GMP reductase (327 aa).

The Thioimidate intermediate role is filled by Cys176. An NADP(+)-binding site is contributed by 205-228; the sequence is IIADGGIRTHGDIAKSIRFGASMV.

It belongs to the IMPDH/GMPR family. GuaC type 2 subfamily.

It carries out the reaction IMP + NH4(+) + NADP(+) = GMP + NADPH + 2 H(+). Its function is as follows. Catalyzes the irreversible NADPH-dependent deamination of GMP to IMP. It functions in the conversion of nucleobase, nucleoside and nucleotide derivatives of G to A nucleotides, and in maintaining the intracellular balance of A and G nucleotides. The sequence is that of GMP reductase from Streptococcus agalactiae serotype V (strain ATCC BAA-611 / 2603 V/R).